The following is a 263-amino-acid chain: Acyl-[acyl-carrier-protein]--UDP-N-acetylglucosamine O-acyltransferase (263 aa).

It belongs to the transferase hexapeptide repeat family. LpxA subfamily. In terms of assembly, homotrimer.

Its subcellular location is the cytoplasm. It carries out the reaction a (3R)-hydroxyacyl-[ACP] + UDP-N-acetyl-alpha-D-glucosamine = a UDP-3-O-[(3R)-3-hydroxyacyl]-N-acetyl-alpha-D-glucosamine + holo-[ACP]. Its pathway is glycolipid biosynthesis; lipid IV(A) biosynthesis; lipid IV(A) from (3R)-3-hydroxytetradecanoyl-[acyl-carrier-protein] and UDP-N-acetyl-alpha-D-glucosamine: step 1/6. Involved in the biosynthesis of lipid A, a phosphorylated glycolipid that anchors the lipopolysaccharide to the outer membrane of the cell. This chain is Acyl-[acyl-carrier-protein]--UDP-N-acetylglucosamine O-acyltransferase, found in Xanthomonas axonopodis pv. citri (strain 306).